An 81-amino-acid chain; its full sequence is uncharacterized protein (81 aa).

The signal sequence occupies residues 1–22; the sequence is MNKKLSIIFLIFALIASVLCSA. Residues 29–81 are disordered; it reads HSSSTTTTTSSSGGTSGTDSSINTGSSYSGSGSGSGSTGGSGSGSGSGTAKWK. A compositionally biased stretch (low complexity) spans 30–58; that stretch reads SSSTTTTTSSSGGTSGTDSSINTGSSYSG. The segment covering 59 to 75 has biased composition (gly residues); sequence SGSGSGSTGGSGSGSGS.

The protein resides in the secreted. This is an uncharacterized protein from Dictyostelium discoideum (Social amoeba).